The sequence spans 193 residues: Ion-translocating oxidoreductase complex subunit A (193 aa).

6 helical membrane-spanning segments follow: residues 5–25, 39–59, 62–82, 102–122, 134–154, and 171–191; these read LLLF…FLGL, IGMG…SWLM, FILV…LVIA, LLGI…VALL, AVYG…FAAI, and SIGL…SGLV.

Belongs to the NqrDE/RnfAE family. As to quaternary structure, the complex is composed of six subunits: RnfA, RnfB, RnfC, RnfD, RnfE and RnfG.

The protein localises to the cell inner membrane. Part of a membrane-bound complex that couples electron transfer with translocation of ions across the membrane. This Proteus mirabilis (strain HI4320) protein is Ion-translocating oxidoreductase complex subunit A.